Consider the following 933-residue polypeptide: Isoleucine--tRNA ligase (933 aa).

The 'HIGH' region motif lies at 57-67 (PYANGNIHVGH). Residue E554 coordinates L-isoleucyl-5'-AMP. The short motif at 595–599 (KMSKS) is the 'KMSKS' region element. Position 598 (K598) interacts with ATP.

Belongs to the class-I aminoacyl-tRNA synthetase family. IleS type 1 subfamily. In terms of assembly, monomer.

The protein localises to the cytoplasm. The enzyme catalyses tRNA(Ile) + L-isoleucine + ATP = L-isoleucyl-tRNA(Ile) + AMP + diphosphate. Its function is as follows. Catalyzes the attachment of isoleucine to tRNA(Ile). As IleRS can inadvertently accommodate and process structurally similar amino acids such as valine, to avoid such errors it has two additional distinct tRNA(Ile)-dependent editing activities. One activity is designated as 'pretransfer' editing and involves the hydrolysis of activated Val-AMP. The other activity is designated 'posttransfer' editing and involves deacylation of mischarged Val-tRNA(Ile). This is Isoleucine--tRNA ligase from Streptococcus pyogenes serotype M6 (strain ATCC BAA-946 / MGAS10394).